The primary structure comprises 1430 residues: Bromodomain-containing protein homolog (1430 aa).

The segment at 23–49 (FACPVRGCDRSYKTIMGLQYHLMKYDH) adopts a C2H2-type zinc-finger fold. The segment at 51–111 (NPQPLTPVLT…AGGGSASGVS (61 aa)) is disordered. Over residues 62 to 81 (SRKKARSRSGGHHSTPRPHK) the composition is skewed to basic residues. Residues 283 to 333 (DAVCCICLDGECQNTNVILFCDMCNLAVHQDCYGVPYIPEGQWLCRRCLQS) form a PHD-type 1 zinc finger. Residues C286, C289, C303, C306, H311, C314, C327, and C330 each contribute to the Zn(2+) site. A C2HC pre-PHD-type zinc finger spans residues 337–370 (PVNCVLCPNAGGAFKQTDHGQWAHVVCALWIPEV). Residues 394–457 (LTCYVCKEKG…QKFAYCHAHT (64 aa)) form a PHD-type 2 zinc finger. One can recognise a Bromo domain in the interval 611–715 (LQLNPLEAAL…DQAAPLFVQV (105 aa)). Basic residues predominate over residues 796-805 (KARFAARHSS). Disordered regions lie at residues 796–887 (KARF…SSPV), 901–942 (AQAA…TTAA), 1012–1054 (ANLP…QALP), and 1076–1301 (QRDV…GQKP). Over residues 842–857 (HDDDDEEEDSDEDSMG) the composition is skewed to acidic residues. A compositionally biased stretch (polar residues) spans 865-887 (LLNSTQTPPCSPIKSLNNSSSPV). Composition is skewed to low complexity over residues 922–942 (NSQS…TTAA), 1034–1043 (SSSMSPKKSP), and 1085–1107 (APSQ…SCSD). Residues 1108–1120 (FDSDEASEGDADG) show a composition bias toward acidic residues. A compositionally biased stretch (basic and acidic residues) spans 1121 to 1137 (DPDRDGGRSRSEERDST). Polar residues-rich tracts occupy residues 1151–1165 (ASLN…NMAI) and 1265–1278 (NTTA…TNNN). Residues 1281–1293 (KHSEDSASSERHN) show a composition bias toward basic and acidic residues. The PWWP domain occupies 1305 to 1378 (PLQLVWAKCR…TWQWLPANKL (74 aa)).

Component of the Enok complex composed of at least Br140, enok, Eaf6 and Ing5. As part of the Enok complex, interacts with elg1 and the Elg1 RFC-like complex.

Its subcellular location is the nucleus. In terms of biological role, scaffold subunit of the histone acetyltransferase (HAT) Enok complex which has histone H3 acetyltransferase activity. As part of the Enok complex, associates with the Elg1 RFC-like complex and down-regulates its PCNA-unloading function to promote the G1/S transition. May also play a role in maintaining the protein levels and stability of enok. The chain is Bromodomain-containing protein homolog from Drosophila melanogaster (Fruit fly).